We begin with the raw amino-acid sequence, 143 residues long: Phospholipase A2 isozymes PA3A/PA3B/PA5 (143 aa).

Positions 10, 12, and 14 each coordinate Ca(2+). 3 disulfides stabilise this stretch: Cys-11–Cys-33, Cys-32–Cys-72, and Cys-39–Cys-65. The active site involves His-36. Ca(2+) is bound at residue Asp-37.

Belongs to the phospholipase A2 family. Group III subfamily. Requires Ca(2+) as cofactor. In terms of tissue distribution, expressed by the venom gland.

It localises to the secreted. The enzyme catalyses a 1,2-diacyl-sn-glycero-3-phosphocholine + H2O = a 1-acyl-sn-glycero-3-phosphocholine + a fatty acid + H(+). PLA2 catalyzes the calcium-dependent hydrolysis of the 2-acyl groups in 3-sn-phosphoglycerides. The polypeptide is Phospholipase A2 isozymes PA3A/PA3B/PA5 (Heloderma suspectum (Gila monster)).